The chain runs to 363 residues: Aminomethyltransferase (363 aa).

This sequence belongs to the GcvT family. As to quaternary structure, the glycine cleavage system is composed of four proteins: P, T, L and H.

It catalyses the reaction N(6)-[(R)-S(8)-aminomethyldihydrolipoyl]-L-lysyl-[protein] + (6S)-5,6,7,8-tetrahydrofolate = N(6)-[(R)-dihydrolipoyl]-L-lysyl-[protein] + (6R)-5,10-methylene-5,6,7,8-tetrahydrofolate + NH4(+). Functionally, the glycine cleavage system catalyzes the degradation of glycine. This Staphylococcus saprophyticus subsp. saprophyticus (strain ATCC 15305 / DSM 20229 / NCIMB 8711 / NCTC 7292 / S-41) protein is Aminomethyltransferase.